A 384-amino-acid polypeptide reads, in one-letter code: Glutamate 5-kinase (384 aa).

An ATP-binding site is contributed by Lys24. Substrate contacts are provided by Ser64, Asp149, and Asn161. ATP-binding positions include Thr181–Asp182 and Thr223–Lys229. Residues Pro288–Thr370 form the PUA domain.

The protein belongs to the glutamate 5-kinase family.

Its subcellular location is the cytoplasm. The enzyme catalyses L-glutamate + ATP = L-glutamyl 5-phosphate + ADP. The protein operates within amino-acid biosynthesis; L-proline biosynthesis; L-glutamate 5-semialdehyde from L-glutamate: step 1/2. In terms of biological role, catalyzes the transfer of a phosphate group to glutamate to form L-glutamate 5-phosphate. In Xylella fastidiosa (strain M12), this protein is Glutamate 5-kinase.